A 173-amino-acid polypeptide reads, in one-letter code: Crossover junction endodeoxyribonuclease RuvC (173 aa).

Active-site residues include D8, E67, and D139. The Mg(2+) site is built by D8, E67, and D139.

The protein belongs to the RuvC family. As to quaternary structure, homodimer which binds Holliday junction (HJ) DNA. The HJ becomes 2-fold symmetrical on binding to RuvC with unstacked arms; it has a different conformation from HJ DNA in complex with RuvA. In the full resolvosome a probable DNA-RuvA(4)-RuvB(12)-RuvC(2) complex forms which resolves the HJ. It depends on Mg(2+) as a cofactor.

The protein resides in the cytoplasm. It catalyses the reaction Endonucleolytic cleavage at a junction such as a reciprocal single-stranded crossover between two homologous DNA duplexes (Holliday junction).. In terms of biological role, the RuvA-RuvB-RuvC complex processes Holliday junction (HJ) DNA during genetic recombination and DNA repair. Endonuclease that resolves HJ intermediates. Cleaves cruciform DNA by making single-stranded nicks across the HJ at symmetrical positions within the homologous arms, yielding a 5'-phosphate and a 3'-hydroxyl group; requires a central core of homology in the junction. The consensus cleavage sequence is 5'-(A/T)TT(C/G)-3'. Cleavage occurs on the 3'-side of the TT dinucleotide at the point of strand exchange. HJ branch migration catalyzed by RuvA-RuvB allows RuvC to scan DNA until it finds its consensus sequence, where it cleaves and resolves the cruciform DNA. The sequence is that of Crossover junction endodeoxyribonuclease RuvC from Yersinia pseudotuberculosis serotype O:1b (strain IP 31758).